Consider the following 266-residue polypeptide: Ribosome-recycling factor, chloroplastic (266 aa).

Residues 1–26 show a composition bias toward low complexity; it reads MPPLHAVSPAAAAAPPRALSSAARVP. The disordered stretch occupies residues 1-30; it reads MPPLHAVSPAAAAAPPRALSSAARVPQRPG. The N-terminal 74 residues, 1–74, are a transit peptide targeting the chloroplast; that stretch reads MPPLHAVSPA…SDKRAVLRHA (74 aa). Coiled-coil stretches lie at residues 75-109 and 207-266; these read TIEEIEAEKSVIEDQARERMEKAIETVQNNFNTVR and VAIR…LMKI.

The protein belongs to the RRF family.

It is found in the plastid. Its subcellular location is the chloroplast. Responsible for the release of ribosomes from messenger RNA at the termination of chloroplastic protein biosynthesis. The polypeptide is Ribosome-recycling factor, chloroplastic (Oryza sativa subsp. indica (Rice)).